The chain runs to 176 residues: MTVERVVSIPSGVSVTMDGTVLHVKGPKGNLQRDMWYPGIEITIGSEDVRFTTESQKKAVTSMVGTLASHCSNMCTGVTKGYLYSMKVVYSHFPIQIKVVGETLEIVNFLGEKYPRSARILPGTTVKVGSDEVTVTGIDKEVVGSTAANIERATRIRDRDPRVFQDGIYIVSRSEQ.

Belongs to the universal ribosomal protein uL6 family. In terms of assembly, part of the 50S ribosomal subunit.

Functionally, this protein binds to the 23S rRNA, and is important in its secondary structure. It is located near the subunit interface in the base of the L7/L12 stalk, and near the tRNA binding site of the peptidyltransferase center. In Methanospirillum hungatei JF-1 (strain ATCC 27890 / DSM 864 / NBRC 100397 / JF-1), this protein is Large ribosomal subunit protein uL6.